The chain runs to 557 residues: Dihydroxy-acid dehydratase (557 aa).

Residue aspartate 78 coordinates Mg(2+). A [2Fe-2S] cluster-binding site is contributed by cysteine 119. Aspartate 120 and lysine 121 together coordinate Mg(2+). Lysine 121 bears the N6-carboxylysine mark. Position 192 (cysteine 192) interacts with [2Fe-2S] cluster. Glutamate 442 is a Mg(2+) binding site. The Proton acceptor role is filled by serine 468.

It belongs to the IlvD/Edd family. Homodimer. Requires [2Fe-2S] cluster as cofactor. Mg(2+) is required as a cofactor.

It catalyses the reaction (2R)-2,3-dihydroxy-3-methylbutanoate = 3-methyl-2-oxobutanoate + H2O. The enzyme catalyses (2R,3R)-2,3-dihydroxy-3-methylpentanoate = (S)-3-methyl-2-oxopentanoate + H2O. The protein operates within amino-acid biosynthesis; L-isoleucine biosynthesis; L-isoleucine from 2-oxobutanoate: step 3/4. It participates in amino-acid biosynthesis; L-valine biosynthesis; L-valine from pyruvate: step 3/4. In terms of biological role, functions in the biosynthesis of branched-chain amino acids. Catalyzes the dehydration of (2R,3R)-2,3-dihydroxy-3-methylpentanoate (2,3-dihydroxy-3-methylvalerate) into 2-oxo-3-methylpentanoate (2-oxo-3-methylvalerate) and of (2R)-2,3-dihydroxy-3-methylbutanoate (2,3-dihydroxyisovalerate) into 2-oxo-3-methylbutanoate (2-oxoisovalerate), the penultimate precursor to L-isoleucine and L-valine, respectively. In Bacillus mycoides (strain KBAB4) (Bacillus weihenstephanensis), this protein is Dihydroxy-acid dehydratase.